Reading from the N-terminus, the 249-residue chain is MKILVCENYDKLSEKAAQIIMSQITLKSNSILGLATGSTPIGMYKKLVEMYENKMIDFSDVKTFNLDEYQNLPISNDQSYHYFMDDNLFNYINVKRENIYIPNGMANDIENECIKYDNLIKEAGGIDIQVLGIGNNAHIGFNEPTVNFEKKTYVVELEESTKIANARFFNSLDEVPSKAITMGIGSIFESKKIMLLATGENKAKAIYDTIYGKVTPEVPASILQFHDDLIVILDKEAASLLNPKDYKVV.

D67 acts as the Proton acceptor; for enolization step in catalysis. The For ring-opening step role is filled by N136. H138 acts as the Proton acceptor; for ring-opening step in catalysis. The active-site For ring-opening step is E143.

The protein belongs to the glucosamine/galactosamine-6-phosphate isomerase family. NagB subfamily.

The enzyme catalyses alpha-D-glucosamine 6-phosphate + H2O = beta-D-fructose 6-phosphate + NH4(+). The protein operates within amino-sugar metabolism; N-acetylneuraminate degradation; D-fructose 6-phosphate from N-acetylneuraminate: step 5/5. Functionally, catalyzes the reversible isomerization-deamination of glucosamine 6-phosphate (GlcN6P) to form fructose 6-phosphate (Fru6P) and ammonium ion. This Clostridium botulinum (strain Eklund 17B / Type B) protein is Glucosamine-6-phosphate deaminase.